Reading from the N-terminus, the 210-residue chain is Helix-loop-helix protein 26 (210 aa).

Low complexity predominate over residues 1–15 (MSSSPTSSSSGSPSS). The tract at residues 1-33 (MSSSPTSSSSGSPSSHGHRSETEKQRRDDTNDL) is disordered. In terms of domain architecture, bHLH spans 14–65 (SSHGHRSETEKQRRDDTNDLLNEFKKIVQKSESEKLSKEEVLFRIVKLLSGI). The segment covering 18 to 33 (HRSETEKQRRDDTNDL) has biased composition (basic and acidic residues).

As to quaternary structure, homodimer; binds to DNA as a homodimer. In terms of tissue distribution, expressed in intestinal cells (at protein level).

The protein localises to the nucleus. Its function is as follows. As a homodimer binds DNA via the E-box sequence 5'-CACGTG-3'. Represses lag-2 transcription during embryogenesis via Notch signaling, in an unc-37-dependent manner. Also represses tbx-37 independent of Notch signaling. In the intestine, plays a role in probiotic-mediated protection against infections by pathogens such as S.enterica. This is most likely by positively regulating the expression of genes such as bar-1 upon exposure to probiotic bacteria such as the E.faecium. The polypeptide is Helix-loop-helix protein 26 (Caenorhabditis elegans).